The sequence spans 528 residues: Tubulin-specific chaperone E (528 aa).

Residues 27-71 (GLVPPVAGLWLGVEWDNPERGKHDGSHEGTVYFKCRHPTAGSFIR) enclose the CAP-Gly domain. LRR repeat units lie at residues 152–176 (CPNI…DIAD), 178–206 (LKHL…TFPT), 207–229 (LKVL…ASGW), 231–253 (VLEK…DVLQ), 254–274 (TVKL…LFLI), 279–300 (RLEQ…DAGI), and 309–330 (SLQY…NELD). The region spanning 343–385 (NPLTEGSKDAQTTRQFIIARIGQLRTLNKCAIEPEERRGAELD) is the LRRCT domain. Position 464 is an N6-acetyllysine (K464). S496 bears the Phosphoserine mark.

It belongs to the TBCE family. As to quaternary structure, supercomplex made of cofactors A to E. Cofactors A and D function by capturing and stabilizing tubulin in a quasi-native conformation. Cofactor E binds to the cofactor D-tubulin complex; interaction with cofactor C then causes the release of tubulin polypeptides that are committed to the native state. Cofactors B and E can form a heterodimer which binds to alpha-tubulin and enhances their ability to dissociate tubulin heterodimers. Interacts with TBCD.

It is found in the cytoplasm. The protein resides in the cytoskeleton. Its function is as follows. Tubulin-folding protein; involved in the second step of the tubulin folding pathway and in the regulation of tubulin heterodimer dissociation. Required for correct organization of microtubule cytoskeleton and mitotic splindle, and maintenance of the neuronal microtubule network. This is Tubulin-specific chaperone E (TBCE) from Bos taurus (Bovine).